The primary structure comprises 183 residues: Ribosome-recycling factor (183 aa).

This sequence belongs to the RRF family.

It localises to the cytoplasm. In terms of biological role, responsible for the release of ribosomes from messenger RNA at the termination of protein biosynthesis. May increase the efficiency of translation by recycling ribosomes from one round of translation to another. The sequence is that of Ribosome-recycling factor from Ureaplasma urealyticum serovar 10 (strain ATCC 33699 / Western).